The sequence spans 493 residues: Uridine 5'-monophosphate synthase (493 aa).

The tract at residues 1–207 (MVAQNSDKMR…VAKYIAAVQI (207 aa)) is OPRTase. Residues 208–233 (NSDGTFVGGDKGDVVRANDLQRTKLT) form a domain linker region. The segment at 234–493 (YENRANLAKS…WAAYQDRVAK (260 aa)) is OMPdecase. Residue K320 is part of the active site.

In the N-terminal section; belongs to the purine/pyrimidine phosphoribosyltransferase family. It in the C-terminal section; belongs to the OMP decarboxylase family.

It carries out the reaction orotidine 5'-phosphate + diphosphate = orotate + 5-phospho-alpha-D-ribose 1-diphosphate. It catalyses the reaction orotidine 5'-phosphate + H(+) = UMP + CO2. The protein operates within pyrimidine metabolism; UMP biosynthesis via de novo pathway; UMP from orotate: step 1/2. It functions in the pathway pyrimidine metabolism; UMP biosynthesis via de novo pathway; UMP from orotate: step 2/2. The protein is Uridine 5'-monophosphate synthase (r-l) of Drosophila melanogaster (Fruit fly).